The chain runs to 812 residues: DNA replication licensing factor MCM3 (812 aa).

Alanine 2 carries the post-translational modification N-acetylalanine. Serine 160 is modified (phosphoserine). Residue lysine 293 is modified to N6-acetyllysine. One can recognise an MCM domain in the interval 295–502 (VFEQLARSLA…QDREISDHVL (208 aa)). Residues glutamine 353, leucine 393, glutamate 394, alanine 395, and alanine 397 each coordinate ADP. The Arginine finger motif lies at 477 to 480 (SRFD). Lysine 547 is subject to N6-acetyllysine. The residue at position 611 (serine 611) is a Phosphoserine. Arginine 664 is a binding site for ATP. Residues 664–744 (RKKASEDESD…TQDSQKVELS (81 aa)) are disordered. A phosphoserine mark is found at serine 668, serine 672, and serine 681. A compositionally biased stretch (acidic residues) spans 670–681 (DESDLEDEEEKS). Tyrosine 705 carries the phosphotyrosine modification. Phosphoserine is present on serine 708. Phosphothreonine is present on residues threonine 719, threonine 722, and threonine 729. Over residues 720–744 (PKTDDSQEKTDDSQETQDSQKVELS) the composition is skewed to basic and acidic residues. Residues serine 732 and serine 738 each carry the phosphoserine modification.

It belongs to the MCM family. As to quaternary structure, component of the MCM2-7 complex. The complex forms a toroidal hexameric ring with the proposed subunit order MCM2-MCM6-MCM4-MCM7-MCM3-MCM5. Component of the CMG helicase complex, a hexameric ring of related MCM2-7 subunits stabilized by CDC45 and the tetrameric GINS complex. Associated with the replication-specific DNA polymerase alpha. Interacts with MCMBP. Interacts with ANKRD17. Interacts with MCM3AP; this interaction leads to MCM3 acetylation. In terms of processing, acetylated by MCM3AP. Post-translationally, O-glycosylated (O-GlcNAcylated), in a cell cycle-dependent manner.

The protein localises to the nucleus. The protein resides in the chromosome. It carries out the reaction ATP + H2O = ADP + phosphate + H(+). Its function is as follows. Acts as a component of the MCM2-7 complex (MCM complex) which is the replicative helicase essential for 'once per cell cycle' DNA replication initiation and elongation in eukaryotic cells. Core component of CDC45-MCM-GINS (CMG) helicase, the molecular machine that unwinds template DNA during replication, and around which the replisome is built. The active ATPase sites in the MCM2-7 ring are formed through the interaction surfaces of two neighboring subunits such that a critical structure of a conserved arginine finger motif is provided in trans relative to the ATP-binding site of the Walker A box of the adjacent subunit. The six ATPase active sites, however, are likely to contribute differentially to the complex helicase activity. Required for the entry in S phase and for cell division. This is DNA replication licensing factor MCM3 (Mcm3) from Mus musculus (Mouse).